Reading from the N-terminus, the 211-residue chain is UPF0319 protein VC_A0026 (211 aa).

The N-terminal stretch at 1 to 21 is a signal peptide; it reads MKPMQRLTCLLALCFAASASA.

Belongs to the UPF0319 family.

In Vibrio cholerae serotype O1 (strain ATCC 39315 / El Tor Inaba N16961), this protein is UPF0319 protein VC_A0026.